Reading from the N-terminus, the 290-residue chain is Pirin (290 aa).

Fe cation contacts are provided by His56, His58, His101, and Glu103.

It belongs to the pirin family. In terms of assembly, may interact with NF1/CTF1. Interacts with BCL3. Identified in a complex comprised of PIR, BLC3, NFKB1 and target DNA. Fe cation serves as cofactor. Weakly expressed in bone marrow.

Its subcellular location is the nucleus. It is found in the cytoplasm. The enzyme catalyses quercetin + O2 = 2-(3,4-dihydroxybenzoyloxy)-4,6-dihydroxybenzoate + CO. The protein operates within flavonoid metabolism; quercetin degradation. Transcriptional coregulator of NF-kappa-B which facilitates binding of NF-kappa-B proteins to target kappa-B genes in a redox-state-dependent manner. May be required for efficient terminal myeloid maturation of hematopoietic cells. Has quercetin 2,3-dioxygenase activity (in vitro). The polypeptide is Pirin (Pir) (Mus musculus (Mouse)).